Here is a 377-residue protein sequence, read N- to C-terminus: Peroxisomal membrane protein PEX14 (377 aa).

Residues 1 to 15 (MASSEQAEQPSQPSS) are compositionally biased toward low complexity. The interval 1–24 (MASSEQAEQPSQPSSTPGSENVLP) is disordered. The residue at position 2 (A2) is an N-acetylalanine. Over 2–108 (ASSEQAEQPS…YSPAGSRWRD (107 aa)) the chain is Peroxisomal matrix. Residue K34 is modified to N6-acetyllysine. A helical membrane pass occupies residues 109–126 (YGALAIIMAGIAFGFHQL). The Cytoplasmic portion of the chain corresponds to 127–377 (YKKYLLPLIL…EGASNESERD (251 aa)). The segment at 230-377 (PPSPSAPKIP…EGASNESERD (148 aa)) is disordered. S232 carries the phosphoserine modification. Composition is skewed to low complexity over residues 244 to 259 (PVKS…VNHH) and 265 to 275 (SPVSNESTSSS). A phosphoserine mark is found at S282 and S335. A compositionally biased stretch (acidic residues) spans 323–342 (KEDEEDEEDDDVSHVDEEDC). Over residues 360-377 (QVEKLRRPEGASNESERD) the composition is skewed to basic and acidic residues.

Belongs to the peroxin-14 family. Interacts with PEX13; forming the PEX13-PEX14 docking complex. Interacts with PEX5 (via WxxxF/Y motifs). Interacts with PEX19. Interacts with tubulin.

It is found in the peroxisome membrane. Its function is as follows. Component of the PEX13-PEX14 docking complex, a translocon channel that specifically mediates the import of peroxisomal cargo proteins bound to PEX5 receptor. The PEX13-PEX14 docking complex forms a large import pore which can be opened to a diameter of about 9 nm. Mechanistically, PEX5 receptor along with cargo proteins associates with the PEX14 subunit of the PEX13-PEX14 docking complex in the cytosol, leading to the insertion of the receptor into the organelle membrane with the concomitant translocation of the cargo into the peroxisome matrix. Plays a key role for peroxisome movement through a direct interaction with tubulin. The chain is Peroxisomal membrane protein PEX14 from Homo sapiens (Human).